The chain runs to 158 residues: Transcription elongation factor GreA (158 aa).

The stretch at 47–75 forms a coiled coil; sequence ENSEYDAAKDEQAFVEQRITQVEKMIRNA.

The protein belongs to the GreA/GreB family.

Its function is as follows. Necessary for efficient RNA polymerase transcription elongation past template-encoded arresting sites. The arresting sites in DNA have the property of trapping a certain fraction of elongating RNA polymerases that pass through, resulting in locked ternary complexes. Cleavage of the nascent transcript by cleavage factors such as GreA or GreB allows the resumption of elongation from the new 3'terminus. GreA releases sequences of 2 to 3 nucleotides. The chain is Transcription elongation factor GreA from Oceanobacillus iheyensis (strain DSM 14371 / CIP 107618 / JCM 11309 / KCTC 3954 / HTE831).